The following is a 234-amino-acid chain: Golgi SNAP receptor complex member 1 (234 aa).

The Cytoplasmic portion of the chain corresponds to 1 to 212; the sequence is MSETWEALRK…MQKIKTKKQK (212 aa). The stretch at 54-121 forms a coiled coil; that stretch reads VTTEIEGLIE…RDNVDQVLQR (68 aa). The helical; Anchor for type IV membrane protein transmembrane segment at 213–233 threads the bilayer; the sequence is NTLILAAVISSCLIFTIFWII. Position 234 (N234) is a topological domain, vesicular.

This sequence belongs to the GOSR1 family. In terms of assembly, component of several multiprotein Golgi SNARE complexes.

The protein localises to the golgi apparatus membrane. Its function is as follows. Involved in transport from the ER to the Golgi apparatus as well as in intra-Golgi transport. It belongs to a super-family of proteins called t-SNAREs or soluble NSF (N-ethylmaleimide-sensitive factor) attachment protein receptor. Cooperates with ykt-6 for proper expression of Golgi-resident proteins. Required along with ykt-6 for normal embryonic development, seam cell division or differentiation, and ray formation. The protein is Golgi SNAP receptor complex member 1 (gos-28) of Caenorhabditis elegans.